We begin with the raw amino-acid sequence, 189 residues long: Haloacid dehalogenase-like hydrolase domain-containing protein 3 (189 aa).

The protein belongs to the HAD-like hydrolase superfamily.

This chain is Haloacid dehalogenase-like hydrolase domain-containing protein 3 (hdhd3), found in Xenopus tropicalis (Western clawed frog).